Reading from the N-terminus, the 430-residue chain is Serine--tRNA ligase (430 aa).

The tract at residues 41-60 (QSRTQDLQNERNVRSKSIGK) is disordered. 236–238 (TAE) contacts L-serine. 267–269 (RSE) is an ATP binding site. Glu-290 contributes to the L-serine binding site. 354–357 (EISS) is an ATP binding site. Ser-390 provides a ligand contact to L-serine.

Belongs to the class-II aminoacyl-tRNA synthetase family. Type-1 seryl-tRNA synthetase subfamily. In terms of assembly, homodimer. The tRNA molecule binds across the dimer.

It localises to the cytoplasm. It catalyses the reaction tRNA(Ser) + L-serine + ATP = L-seryl-tRNA(Ser) + AMP + diphosphate + H(+). It carries out the reaction tRNA(Sec) + L-serine + ATP = L-seryl-tRNA(Sec) + AMP + diphosphate + H(+). It functions in the pathway aminoacyl-tRNA biosynthesis; selenocysteinyl-tRNA(Sec) biosynthesis; L-seryl-tRNA(Sec) from L-serine and tRNA(Sec): step 1/1. In terms of biological role, catalyzes the attachment of serine to tRNA(Ser). Is also able to aminoacylate tRNA(Sec) with serine, to form the misacylated tRNA L-seryl-tRNA(Sec), which will be further converted into selenocysteinyl-tRNA(Sec). The polypeptide is Serine--tRNA ligase (Alteromonas mediterranea (strain DSM 17117 / CIP 110805 / LMG 28347 / Deep ecotype)).